A 695-amino-acid polypeptide reads, in one-letter code: ATP-dependent permease MDL1, mitochondrial (695 aa).

Residues 1–100 constitute a mitochondrion transit peptide; sequence MIVRMIRLCK…RLFVLSKPES (100 aa). 5 helical membrane passes run 103 to 123, 156 to 176, 242 to 262, 337 to 357, and 372 to 392; these read IGLA…VPSV, FTAL…RIII, FVGF…MMIL, GLFF…LLLV, and LSSF…LSSF. The ABC transmembrane type-1 domain maps to 103-398; it reads IGLALLLILI…LSSFYSELMK (296 aa). Positions 432–673 constitute an ABC transporter domain; it reads IVFKNVSFTY…PNSELNALLA (242 aa). 467–474 is a binding site for ATP; it reads GPSGSGKS.

Belongs to the ABC transporter superfamily. ABCB family. Mitochondrial peptide exporter (TC 3.A.1.212) subfamily.

The protein localises to the mitochondrion inner membrane. In terms of biological role, mediates export of peptides with molecular masses of 2100 to 600 daltons generated upon proteolysis of mitochondrial inner membrane proteins. This Saccharomyces cerevisiae (strain ATCC 204508 / S288c) (Baker's yeast) protein is ATP-dependent permease MDL1, mitochondrial (MDL1).